The sequence spans 406 residues: Imidazolonepropionase (406 aa).

H72 and H74 together coordinate Fe(3+). Zn(2+)-binding residues include H72 and H74. R81, Y144, and H177 together coordinate 4-imidazolone-5-propanoate. N-formimidoyl-L-glutamate is bound at residue Y144. H242 contributes to the Fe(3+) binding site. H242 is a Zn(2+) binding site. Q245 contacts 4-imidazolone-5-propanoate. D317 contributes to the Fe(3+) binding site. D317 lines the Zn(2+) pocket. Positions 319 and 321 each coordinate N-formimidoyl-L-glutamate. T322 is a 4-imidazolone-5-propanoate binding site.

Belongs to the metallo-dependent hydrolases superfamily. HutI family. Zn(2+) serves as cofactor. The cofactor is Fe(3+).

The protein resides in the cytoplasm. The enzyme catalyses 4-imidazolone-5-propanoate + H2O = N-formimidoyl-L-glutamate. Its pathway is amino-acid degradation; L-histidine degradation into L-glutamate; N-formimidoyl-L-glutamate from L-histidine: step 3/3. In terms of biological role, catalyzes the hydrolytic cleavage of the carbon-nitrogen bond in imidazolone-5-propanoate to yield N-formimidoyl-L-glutamate. It is the third step in the universal histidine degradation pathway. The sequence is that of Imidazolonepropionase from Yersinia pseudotuberculosis serotype O:1b (strain IP 31758).